Here is a 237-residue protein sequence, read N- to C-terminus: Large ribosomal subunit protein uL22m (237 aa).

The protein belongs to the universal ribosomal protein uL22 family.

It localises to the mitochondrion. This Dictyostelium discoideum (Social amoeba) protein is Large ribosomal subunit protein uL22m (mrpl22).